The following is a 290-amino-acid chain: Glucuronoxylan 4-O-methyltransferase 2 (290 aa).

A helical transmembrane segment spans residues 8–28 (FISSKLIFICCSILVLFILFL).

The protein belongs to the methyltransferase superfamily. Expressed in roots, rosette leaves and stems.

The protein resides in the golgi apparatus membrane. It carries out the reaction glucuronoxylan D-glucuronate + n S-adenosyl-L-methionine = glucuronoxylan 4-O-methyl-D-glucuronate + n S-adenosyl-L-homocysteine + n H(+). Its function is as follows. Methyltransferase catalyzing 4-O-methylation of glucuronic acid side chains on xylan. This chain is Glucuronoxylan 4-O-methyltransferase 2 (GXM2), found in Arabidopsis thaliana (Mouse-ear cress).